Here is a 411-residue protein sequence, read N- to C-terminus: Arginine biosynthesis bifunctional protein ArgJ (411 aa).

Substrate-binding residues include T160, K186, T197, E283, N406, and T411. T197 acts as the Nucleophile in catalysis.

Belongs to the ArgJ family. In terms of assembly, heterotetramer of two alpha and two beta chains.

The protein localises to the cytoplasm. It catalyses the reaction N(2)-acetyl-L-ornithine + L-glutamate = N-acetyl-L-glutamate + L-ornithine. The enzyme catalyses L-glutamate + acetyl-CoA = N-acetyl-L-glutamate + CoA + H(+). It participates in amino-acid biosynthesis; L-arginine biosynthesis; L-ornithine and N-acetyl-L-glutamate from L-glutamate and N(2)-acetyl-L-ornithine (cyclic): step 1/1. Its pathway is amino-acid biosynthesis; L-arginine biosynthesis; N(2)-acetyl-L-ornithine from L-glutamate: step 1/4. Its activity is regulated as follows. Feedback inhibition by L-ornithine. Its function is as follows. Catalyzes two activities which are involved in the cyclic version of arginine biosynthesis: the synthesis of N-acetylglutamate from glutamate and acetyl-CoA as the acetyl donor, and of ornithine by transacetylation between N(2)-acetylornithine and glutamate. This chain is Arginine biosynthesis bifunctional protein ArgJ, found in Halalkalibacterium halodurans (strain ATCC BAA-125 / DSM 18197 / FERM 7344 / JCM 9153 / C-125) (Bacillus halodurans).